The primary structure comprises 344 residues: Dihydroorotase (344 aa).

Residues His-13 and His-15 each coordinate Zn(2+). Residues 15–17 and Asn-41 contribute to the substrate site; that span reads HLR. The Zn(2+) site is built by Lys-99, His-136, and His-174. Lys-99 bears the N6-carboxylysine mark. Position 136 (His-136) interacts with substrate. Substrate is bound at residue Leu-219. Residue Asp-247 coordinates Zn(2+). The active site involves Asp-247. Substrate is bound by residues His-251 and Ala-263.

This sequence belongs to the metallo-dependent hydrolases superfamily. DHOase family. Class II DHOase subfamily. In terms of assembly, homodimer. Zn(2+) is required as a cofactor.

The enzyme catalyses (S)-dihydroorotate + H2O = N-carbamoyl-L-aspartate + H(+). The protein operates within pyrimidine metabolism; UMP biosynthesis via de novo pathway; (S)-dihydroorotate from bicarbonate: step 3/3. In terms of biological role, catalyzes the reversible cyclization of carbamoyl aspartate to dihydroorotate. This is Dihydroorotase from Acinetobacter baumannii (strain AB307-0294).